Here is a 679-residue protein sequence, read N- to C-terminus: MISASRAAAARLVGAAASRGPTAARHQDSWNGLSHEAFRLVSRRDYASEAIKGAVVGIDLGTTNSCVAVMEGKQAKVLENAEGARTTPSVVAFTADGERLVGMPAKRQAVTNPNNTFYATKRLIGRRYDDPEVQKDIKNVPFKIVRASNGDAWVEAHGKLYSPSQIGAFVLMKMKETAENYLGHTAKNAVITVPAYFNDSQRQATKDAGQISGLNVLRVINEPTAAALAYGLDKSEDKVIAVYDLGGGTFDISILEIQKGVFEVKSTNGDTFLGGEDFDQALLRHIVKEFKRETGVDLTKDNMALQRVREAAEKAKCELSSSVQTDINLPYLTMDSSGPKHLNMKLTRAQFEGIVTDLIRRTIAPCQKAMQDAEVSKSDIGEVILVGGMTRMPKVQQTVQDLFGRAPSKAVNPDEAVAIGAAIQGGVLAGDVTDVLLLDVTPLSLGIETLGGVFTKLINRNTTIPTKKSQVFSTAADGQTQVEIKVCQGEREMAGDNKLLGQFTLIGIPPAPRGVPQIEVTFDIDANGIVHVSAKDKGTGREQQIVIQSSGGLSKDDIENMVKNAEKYAEEDRRKKERVEAVNMAEGIIHDTETKMEEFKDQLPADECNKLKEEISKMRELLARKDSETGENIRQAASSLQQASLKLFEMAYKKMASEREGSGSSGTGEQKEDQKEEKQ.

A mitochondrion-targeting transit peptide spans 1 to 46 (MISASRAAAARLVGAAASRGPTAARHQDSWNGLSHEAFRLVSRRDY). The tract at residues 1-432 (MISASRAAAA…IQGGVLAGDV (432 aa)) is interaction with NFS1. ADP is bound by residues threonine 63 and asparagine 64. The tract at residues 63–431 (TNSCVAVMEG…AIQGGVLAGD (369 aa)) is nucleotide-binding domain (NBD). Position 76 is an N6-acetyllysine (lysine 76). Threonine 87 carries the phosphothreonine modification. N6-acetyllysine; alternate occurs at positions 135 and 138. Lysine 135 and lysine 138 each carry N6-succinyllysine; alternate. Lysine 143 is modified (N6-acetyllysine). Lysine 206 bears the N6-acetyllysine; alternate mark. At lysine 206 the chain carries N6-succinyllysine; alternate. Lysine 206 is subject to N6-malonyllysine; alternate. An N6-acetyllysine mark is found at lysine 234 and lysine 288. Lysine 300 is modified (N6-acetyllysine; alternate). The residue at position 300 (lysine 300) is an N6-succinyllysine; alternate. ADP is bound by residues glutamate 313, lysine 316, and serine 320. The residue at position 368 (lysine 368) is an N6-succinyllysine. Residues glycine 388 and arginine 391 each coordinate ADP. Position 394 is an N6-succinyllysine (lysine 394). A Phosphoserine modification is found at serine 408. Residues 432–441 (VTDVLLLDVT) form an interdomain linker region. The segment at 432–679 (VTDVLLLDVT…QKEDQKEEKQ (248 aa)) is interaction with FXN and ISCU. The segment at 442–679 (PLSLGIETLG…QKEDQKEEKQ (238 aa)) is substrate-binding domain (SBD). Residue arginine 513 is modified to Omega-N-methylarginine. An N6-acetyllysine; alternate mark is found at lysine 567 and lysine 600. Lysine 567 and lysine 600 each carry N6-succinyllysine; alternate. Lysine 610 carries the N6-succinyllysine modification. Lysine 612 is modified (N6-acetyllysine). The residue at position 646 (lysine 646) is an N6-acetyllysine; alternate. Lysine 646 carries the post-translational modification N6-succinyllysine; alternate. A disordered region spans residues 656-679 (ASEREGSGSSGTGEQKEDQKEEKQ). Positions 669 to 679 (EQKEDQKEEKQ) are enriched in basic and acidic residues.

It belongs to the heat shock protein 70 family. As to quaternary structure, interacts strongly with the intermediate form of FXN and weakly with its mature form. Interacts with HSCB. Associates with the mitochondrial contact site and cristae organizing system (MICOS) complex, composed of at least MICOS10/MIC10, CHCHD3/MIC19, CHCHD6/MIC25, APOOL/MIC27, IMMT/MIC60, APOO/MIC23/MIC26 and QIL1/MIC13. This complex was also known under the names MINOS or MitOS complex. The MICOS complex associates with mitochondrial outer membrane proteins SAMM50, MTX1, MTX2 and DNAJC11, mitochondrial inner membrane protein TMEM11 and with HSPA9. Interacts with DNLZ, the interaction is required to prevent self-aggregation. Interacts with TESPA1. Interacts with PDPN. Interacts with NFU1, NFS1 and ISCU. Interacts with TP53; the interaction promotes TP53 degradation. Interacts (via SBD domain) with UBXN2A; the interaction with UBXN2A inhibits HSPA9 interaction with and degradation of TP53, thereby promotes TP53 translocation to the nucleus. Interacts with ITPR1 AND VDAC1; this interaction couples ITPR1 to VDAC1. Component of the TIM23 mitochondrial inner membrane pre-sequence translocase complex.

Its subcellular location is the mitochondrion. The protein localises to the nucleus. It is found in the nucleolus. The protein resides in the cytoplasm. It localises to the mitochondrion matrix. It catalyses the reaction ATP + H2O = ADP + phosphate + H(+). Its activity is regulated as follows. The chaperone activity is regulated by ATP-induced allosteric coupling of the nucleotide-binding (NBD) and substrate-binding (SBD) domains. ATP binding in the NBD leads to a conformational change in the NBD, which is transferred through the interdomain linker (IDL) to the substrate-binding domain (SBD). This elicits a reduced substrate affinity and a faster substrate exchange rate. Upon hydrolysis of ATP to ADP, the protein undergoes a conformational change that increases its affinity for substrate proteins. It cycles through repeated phases of ATP hydrolysis and nucleotide exchange, facilitating repeated cycles of substrate binding and release. Functions in collaboration with co-chaperones. Functions with the co-chaperone, DNLZ, to maintain solubility and regulate ATP hydrolysis. Nucleotide exchange factors, GRPEL1 and GRPEL2, accelerate nucleotide exchange. Mitochondrial chaperone that plays a key role in mitochondrial protein import, folding, and assembly. Plays an essential role in the protein quality control system, the correct folding of proteins, the re-folding of misfolded proteins, and the targeting of proteins for subsequent degradation. These processes are achieved through cycles of ATP binding, ATP hydrolysis, and ADP release, mediated by co-chaperones. In mitochondria, it associates with the TIM (translocase of the inner membrane) protein complex to assist in the import and folding of mitochondrial proteins. Plays an important role in mitochondrial iron-sulfur cluster (ISC) biogenesis, interacts with and stabilizes ISC cluster assembly proteins FXN, NFU1, NFS1 and ISCU. Regulates erythropoiesis via stabilization of ISC assembly. Regulates mitochondrial calcium-dependent apoptosis by coupling two calcium channels, ITPR1 and VDAC1, at the mitochondria-associated endoplasmic reticulum (ER) membrane to facilitate calcium transport from the ER lumen to the mitochondria intermembrane space, providing calcium for the downstream calcium channel MCU, which releases it into the mitochondrial matrix. Although primarily located in the mitochondria, it is also found in other cellular compartments. In the cytosol, it associates with proteins involved in signaling, apoptosis, or senescence. It may play a role in cell cycle regulation via its interaction with and promotion of degradation of TP53. May play a role in the control of cell proliferation and cellular aging. Protects against reactive oxygen species (ROS). Extracellular HSPA9 plays a cytoprotective role by preventing cell lysis following immune attack by the membrane attack complex by disrupting formation of the complex. This Homo sapiens (Human) protein is Stress-70 protein, mitochondrial.